A 415-amino-acid polypeptide reads, in one-letter code: Phosphoglycerate transport system transcriptional regulatory protein PgtA (415 aa).

The 115-residue stretch at 7–121 (SILLIDDDVD…KLLILIEDAL (115 aa)) folds into the Response regulatory domain. Asp56 bears the 4-aspartylphosphate mark. Positions 142–341 (LIGRSEWMNQ…LANAAELFAV (200 aa)) constitute a Sigma-54 factor interaction domain. 170 to 177 (GEHGTGRM) provides a ligand contact to ATP. A DNA-binding region (H-T-H motif) is located at residues 385–404 (INEVAEYLQIPRKKLYLRMK).

In terms of processing, phosphorylated by PgtB.

The protein resides in the cytoplasm. Functionally, member of the two-component regulatory system PgtB/PgtA that regulates the inducible phosphoglycerate transport system. When activated by PgtB it acts in conjunction with sigma-54 as a transcriptional activator. The protein is Phosphoglycerate transport system transcriptional regulatory protein PgtA (pgtA) of Salmonella typhimurium (strain LT2 / SGSC1412 / ATCC 700720).